The chain runs to 66 residues: Large ribosomal subunit protein uL29 (66 aa).

The protein belongs to the universal ribosomal protein uL29 family.

The chain is Large ribosomal subunit protein uL29 from Borrelia recurrentis (strain A1).